The chain runs to 374 residues: tRNA (guanine(26)-N(2))-dimethyltransferase (374 aa).

The region spanning 4–371 (IEIREGKASL…KEIDEIVNCI (368 aa)) is the Trm1 methyltransferase domain. The S-adenosyl-L-methionine site is built by Arg44, Arg69, Asp87, Asp113, and Ala114. Zn(2+)-binding residues include Cys244, Cys247, Cys261, and Cys264.

Belongs to the class I-like SAM-binding methyltransferase superfamily. Trm1 family.

The enzyme catalyses guanosine(26) in tRNA + 2 S-adenosyl-L-methionine = N(2)-dimethylguanosine(26) in tRNA + 2 S-adenosyl-L-homocysteine + 2 H(+). Its function is as follows. Dimethylates a single guanine residue at position 26 of a number of tRNAs using S-adenosyl-L-methionine as donor of the methyl groups. This is tRNA (guanine(26)-N(2))-dimethyltransferase from Sulfurisphaera tokodaii (strain DSM 16993 / JCM 10545 / NBRC 100140 / 7) (Sulfolobus tokodaii).